Reading from the N-terminus, the 170-residue chain is Ureidoglycolate lyase (170 aa).

It belongs to the ureidoglycolate lyase family. In terms of assembly, homodimer. Requires Ni(2+) as cofactor.

It carries out the reaction (S)-ureidoglycolate = urea + glyoxylate. Its pathway is nitrogen metabolism; (S)-allantoin degradation. In terms of biological role, catalyzes the catabolism of the allantoin degradation intermediate (S)-ureidoglycolate, generating urea and glyoxylate. Involved in the utilization of allantoin as nitrogen source. The protein is Ureidoglycolate lyase of Pseudomonas savastanoi pv. phaseolicola (strain 1448A / Race 6) (Pseudomonas syringae pv. phaseolicola (strain 1448A / Race 6)).